The following is a 732-amino-acid chain: MAP7 domain-containing protein 2 (732 aa).

Methionine 1 carries the N-acetylmethionine modification. The segment covering 1–10 (MERGGGGSGT) has biased composition (gly residues). 5 disordered regions span residues 1-64 (MERG…RREE), 95-123 (WRKL…LREE), 157-186 (PGGH…KRLS), 210-244 (GPLN…GKEA), and 279-509 (EFSG…KQKE). The segment covering 49–64 (LKSDERQRLAKERREE) has biased composition (basic and acidic residues). A coiled-coil region spans residues 51–146 (SDERQRLAKE…RTQQLELKKK (96 aa)). The span at 329–345 (MPKRKAEKEKSNKEREG) shows a compositional bias: basic and acidic residues. The span at 347 to 357 (LAQQAAGPQGE) shows a compositional bias: low complexity. The span at 359–374 (ALEKHVVDKHASEKHA) shows a compositional bias: basic and acidic residues. A compositionally biased stretch (low complexity) spans 375–386 (AAAGGKAENSAA). The segment covering 404–509 (LAEKRRQARL…EKAMIEKQKE (106 aa)) has biased composition (basic and acidic residues).

It belongs to the MAP7 family. In terms of assembly, interacts (via N-terminus) with microtubules; facilitates microtubule stabilization. Interacts with kinesin-1 family members, KIF5A, KIF5B and KIF5C.

The protein localises to the cytoplasm. Its subcellular location is the cytoskeleton. It localises to the microtubule organizing center. The protein resides in the centrosome. It is found in the midbody. The protein localises to the cell projection. Its subcellular location is the neuron projection. It localises to the axon. Functionally, microtubule-stabilizing protein that plays a role in the control of cell motility and neurite outgrowth via direct binding to the microtubule. Acts as a critical cofactor for kinesin transport. In the proximal axon, regulates kinesin-1 family members, KIF5A, KIF5B and KIF5C recruitment to microtubules and contributes to kinesin-1-mediated transport in the axons. In Homo sapiens (Human), this protein is MAP7 domain-containing protein 2 (MAP7D2).